The following is a 276-amino-acid chain: E3 ubiquitin-protein ligase CCNB1IP1 (276 aa).

The RING-type; atypical zinc-finger motif lies at 10–52 (CNYRKCRIKLSGYAWVTACSHIFCDQHGSGEFSRSPAICPACN). Residues 146–182 (MKKVLEEYKKKFSDISEKLMERNRQYQKLQGLYDSLR) adopt a coiled-coil conformation.

As to quaternary structure, interacts with CCNB1, UBE2L3 and NF2. In terms of processing, ubiquitinated; autoubiquitinated. Phosphorylated by CDK1 on serine or threonine residues (in vitro). Expressed predominantly in the testes and 17 day embryos (corresponding to prophase I in females). Weakly or not expressed in other tissues.

The protein resides in the nucleus. It is found in the chromosome. The catalysed reaction is S-ubiquitinyl-[E2 ubiquitin-conjugating enzyme]-L-cysteine + [acceptor protein]-L-lysine = [E2 ubiquitin-conjugating enzyme]-L-cysteine + N(6)-ubiquitinyl-[acceptor protein]-L-lysine.. Its pathway is protein modification; protein ubiquitination. In terms of biological role, ubiquitin E3 ligase that acts as a limiting factor for crossing-over during meiosis: required during zygonema to limit the colocalization of RNF212 with MutS-gamma-associated recombination sites and thereby establish early differentiation of crossover and non-crossover sites. Later, it is directed by MutL-gamma to stably accumulate at designated crossover sites. Probably promotes the dissociation of RNF212 and MutS-gamma to allow the progression of recombination and the implementation of the final steps of crossing over. Modulates cyclin-B levels and participates in the regulation of cell cycle progression through the G2 phase. Overexpression causes delayed entry into mitosis. This chain is E3 ubiquitin-protein ligase CCNB1IP1 (Ccnb1ip1), found in Mus musculus (Mouse).